The primary structure comprises 369 residues: Phosphoribosyl pyrophosphate synthase-associated protein 2 (369 aa).

At Met1 the chain carries N-acetylmethionine. Residues Ser219, Ser227, and Ser233 each carry the phosphoserine modification.

Belongs to the ribose-phosphate pyrophosphokinase family. As to quaternary structure, binds to PRPS1 and PRPS2.

Seems to play a negative regulatory role in 5-phosphoribose 1-diphosphate synthesis. This chain is Phosphoribosyl pyrophosphate synthase-associated protein 2 (Prpsap2), found in Mus musculus (Mouse).